Reading from the N-terminus, the 518-residue chain is Anthranilate synthase component 1 (518 aa).

L-tryptophan contacts are provided by residues serine 41 and 291–293; that span reads PYM. 328-329 contacts chorismate; it reads GS. Residue glutamate 361 participates in Mg(2+) binding. Residues tyrosine 449, arginine 469, 483-485, and glycine 485 contribute to the chorismate site; that span reads GCG. Residue glutamate 498 coordinates Mg(2+).

The protein belongs to the anthranilate synthase component I family. In terms of assembly, heterotetramer consisting of two non-identical subunits: a beta subunit (TrpG) and a large alpha subunit (TrpE). The cofactor is Mg(2+).

It catalyses the reaction chorismate + L-glutamine = anthranilate + pyruvate + L-glutamate + H(+). It participates in amino-acid biosynthesis; L-tryptophan biosynthesis; L-tryptophan from chorismate: step 1/5. Its activity is regulated as follows. Feedback inhibited by tryptophan. Part of a heterotetrameric complex that catalyzes the two-step biosynthesis of anthranilate, an intermediate in the biosynthesis of L-tryptophan. In the first step, the glutamine-binding beta subunit (TrpG) of anthranilate synthase (AS) provides the glutamine amidotransferase activity which generates ammonia as a substrate that, along with chorismate, is used in the second step, catalyzed by the large alpha subunit of AS (TrpE) to produce anthranilate. In the absence of TrpG, TrpE can synthesize anthranilate directly from chorismate and high concentrations of ammonia. This chain is Anthranilate synthase component 1 (trpE), found in Haemophilus influenzae (strain ATCC 51907 / DSM 11121 / KW20 / Rd).